Consider the following 739-residue polypeptide: Catalase-peroxidase 2 (739 aa).

The signal sequence occupies residues 1 to 26 (MKKSTIPTLSALTLAMSLAFGGSVIA). The segment at residues 105 to 227 (WHSAGVYRIF…MGATQMGLIY (123 aa)) is a cross-link (tryptophyl-tyrosyl-methioninium (Trp-Tyr) (with M-253)). H106 functions as the Proton acceptor in the catalytic mechanism. A cross-link (tryptophyl-tyrosyl-methioninium (Tyr-Met) (with W-105)) is located at residues 227 to 253 (YVNPEGPNGVPDPLASAKEIRDTFGRM). Residue H268 coordinates heme b.

The protein belongs to the peroxidase family. Peroxidase/catalase subfamily. As to quaternary structure, homodimer or homotetramer. Heme b serves as cofactor. Formation of the three residue Trp-Tyr-Met cross-link is important for the catalase, but not the peroxidase activity of the enzyme.

The enzyme catalyses H2O2 + AH2 = A + 2 H2O. The catalysed reaction is 2 H2O2 = O2 + 2 H2O. Functionally, bifunctional enzyme with both catalase and broad-spectrum peroxidase activity. This chain is Catalase-peroxidase 2, found in Shewanella sp. (strain MR-7).